The sequence spans 251 residues: 5'-nucleotidase SurE (251 aa).

Aspartate 8, aspartate 9, serine 40, and asparagine 95 together coordinate a divalent metal cation.

Belongs to the SurE nucleotidase family. A divalent metal cation is required as a cofactor.

Its subcellular location is the cytoplasm. It carries out the reaction a ribonucleoside 5'-phosphate + H2O = a ribonucleoside + phosphate. Functionally, nucleotidase that shows phosphatase activity on nucleoside 5'-monophosphates. In Maridesulfovibrio salexigens (strain ATCC 14822 / DSM 2638 / NCIMB 8403 / VKM B-1763) (Desulfovibrio salexigens), this protein is 5'-nucleotidase SurE.